Consider the following 121-residue polypeptide: NAD(P)H-quinone oxidoreductase subunit M (121 aa).

It belongs to the complex I NdhM subunit family. As to quaternary structure, NDH-1 can be composed of about 15 different subunits; different subcomplexes with different compositions have been identified which probably have different functions.

The protein localises to the cellular thylakoid membrane. It catalyses the reaction a plastoquinone + NADH + (n+1) H(+)(in) = a plastoquinol + NAD(+) + n H(+)(out). The enzyme catalyses a plastoquinone + NADPH + (n+1) H(+)(in) = a plastoquinol + NADP(+) + n H(+)(out). Functionally, NDH-1 shuttles electrons from an unknown electron donor, via FMN and iron-sulfur (Fe-S) centers, to quinones in the respiratory and/or the photosynthetic chain. The immediate electron acceptor for the enzyme in this species is believed to be plastoquinone. Couples the redox reaction to proton translocation, and thus conserves the redox energy in a proton gradient. Cyanobacterial NDH-1 also plays a role in inorganic carbon-concentration. The chain is NAD(P)H-quinone oxidoreductase subunit M from Synechococcus sp. (strain JA-2-3B'a(2-13)) (Cyanobacteria bacterium Yellowstone B-Prime).